A 324-amino-acid polypeptide reads, in one-letter code: Glyoxylate/hydroxypyruvate reductase B (324 aa).

Catalysis depends on residues Arg-237 and Glu-266. Catalysis depends on His-285, which acts as the Proton donor.

Belongs to the D-isomer specific 2-hydroxyacid dehydrogenase family. GhrB subfamily. As to quaternary structure, homodimer.

Its subcellular location is the cytoplasm. It catalyses the reaction glycolate + NADP(+) = glyoxylate + NADPH + H(+). It carries out the reaction (R)-glycerate + NAD(+) = 3-hydroxypyruvate + NADH + H(+). The catalysed reaction is (R)-glycerate + NADP(+) = 3-hydroxypyruvate + NADPH + H(+). Its function is as follows. Catalyzes the NADPH-dependent reduction of glyoxylate and hydroxypyruvate into glycolate and glycerate, respectively. This chain is Glyoxylate/hydroxypyruvate reductase B, found in Shigella sonnei (strain Ss046).